Here is a 294-residue protein sequence, read N- to C-terminus: Holothin acyltransferase (294 aa).

Residues 17–146 (WTSKPASLEE…SRLVGIHNQQ (130 aa)) form the N-acetyltransferase domain.

The enzyme catalyses marinoloyl-CoA C + holothin = thiomarinol C + CoA. It carries out the reaction pseudomonoyl-CoA C + holothin = pseudomonic acid C--holothin + CoA. It participates in antibiotic biosynthesis. Its function is as follows. Acyltransferase that catalyzes the formation of pseudomonic acid C-holothin (PAC-holothin), a thiomarinol analog, from pseudomonoyl-CoA C (PAC-CoA) and holothin. Accepts linear CoA substrates of different lengths, including propionyl-, hexanoyl-, octanoyl-, oleoyl- and dodecanoyl-CoA, readily converting all into the corresponding acyl-holothin adducts. In vivo, is probably involved in the biosynthesis of thiomarinol, a naturally occurring double-headed antibiotic. This is Holothin acyltransferase from Pseudoalteromonas sp. (strain SANK 73390).